We begin with the raw amino-acid sequence, 317 residues long: Acetyl-coenzyme A carboxylase carboxyl transferase subunit alpha (317 aa).

The region spanning 39–293 (RLQKKSNDLT…KAVLEKQLHE (255 aa)) is the CoA carboxyltransferase C-terminal domain.

It belongs to the AccA family. As to quaternary structure, acetyl-CoA carboxylase is a heterohexamer composed of biotin carboxyl carrier protein (AccB), biotin carboxylase (AccC) and two subunits each of ACCase subunit alpha (AccA) and ACCase subunit beta (AccD).

The protein resides in the cytoplasm. It carries out the reaction N(6)-carboxybiotinyl-L-lysyl-[protein] + acetyl-CoA = N(6)-biotinyl-L-lysyl-[protein] + malonyl-CoA. Its pathway is lipid metabolism; malonyl-CoA biosynthesis; malonyl-CoA from acetyl-CoA: step 1/1. Its function is as follows. Component of the acetyl coenzyme A carboxylase (ACC) complex. First, biotin carboxylase catalyzes the carboxylation of biotin on its carrier protein (BCCP) and then the CO(2) group is transferred by the carboxyltransferase to acetyl-CoA to form malonyl-CoA. The protein is Acetyl-coenzyme A carboxylase carboxyl transferase subunit alpha of Neisseria gonorrhoeae (strain NCCP11945).